A 660-amino-acid polypeptide reads, in one-letter code: Bifunctional polymyxin resistance protein ArnA (660 aa).

A formyltransferase ArnAFT region spans residues 1–304; sequence MKTVVFAYHD…MLGLVQGSRL (304 aa). 86-88 lines the (6R)-10-formyltetrahydrofolate pocket; that stretch reads HLI. H104 acts as the Proton donor; for formyltransferase activity in catalysis. Residues R114 and 136–140 each bind (6R)-10-formyltetrahydrofolate; that span reads VKRAD. Residues 314–660 form a dehydrogenase ArnADH region; that stretch reads RRTRVLILGV…RTVDLTDKPS (347 aa). Residues D347 and 368–369 each bind NAD(+); that span reads DI. UDP-alpha-D-glucuronate-binding positions include A393, Y398, and 432-433; that span reads TS. The active-site Proton acceptor; for decarboxylase activity is the E434. Residues R460, N492, 526 to 535, and Y613 contribute to the UDP-alpha-D-glucuronate site; that span reads KLIDGGKQKR. Catalysis depends on R619, which acts as the Proton donor; for decarboxylase activity.

In the N-terminal section; belongs to the Fmt family. UDP-L-Ara4N formyltransferase subfamily. This sequence in the C-terminal section; belongs to the NAD(P)-dependent epimerase/dehydratase family. UDP-glucuronic acid decarboxylase subfamily. Homohexamer, formed by a dimer of trimers.

The catalysed reaction is UDP-alpha-D-glucuronate + NAD(+) = UDP-beta-L-threo-pentopyranos-4-ulose + CO2 + NADH. It catalyses the reaction UDP-4-amino-4-deoxy-beta-L-arabinose + (6R)-10-formyltetrahydrofolate = UDP-4-deoxy-4-formamido-beta-L-arabinose + (6S)-5,6,7,8-tetrahydrofolate + H(+). It participates in nucleotide-sugar biosynthesis; UDP-4-deoxy-4-formamido-beta-L-arabinose biosynthesis; UDP-4-deoxy-4-formamido-beta-L-arabinose from UDP-alpha-D-glucuronate: step 1/3. It functions in the pathway nucleotide-sugar biosynthesis; UDP-4-deoxy-4-formamido-beta-L-arabinose biosynthesis; UDP-4-deoxy-4-formamido-beta-L-arabinose from UDP-alpha-D-glucuronate: step 3/3. The protein operates within bacterial outer membrane biogenesis; lipopolysaccharide biosynthesis. Functionally, bifunctional enzyme that catalyzes the oxidative decarboxylation of UDP-glucuronic acid (UDP-GlcUA) to UDP-4-keto-arabinose (UDP-Ara4O) and the addition of a formyl group to UDP-4-amino-4-deoxy-L-arabinose (UDP-L-Ara4N) to form UDP-L-4-formamido-arabinose (UDP-L-Ara4FN). The modified arabinose is attached to lipid A and is required for resistance to polymyxin and cationic antimicrobial peptides. The sequence is that of Bifunctional polymyxin resistance protein ArnA from Shigella sonnei (strain Ss046).